A 2290-amino-acid polypeptide reads, in one-letter code: Armadillo repeat-containing X-linked protein 4 (2290 aa).

A helical membrane pass occupies residues 7 to 24 (VGWVTAGLVIWAGTCYYI). Disordered stretches follow at residues 517-549 (QGEALPNTRGKARGKAKAKCKTGPGMDMKTCTQ), 564-583 (SRVDGRGNPNATSKAGTKAD), 967-988 (KVRGNSNAVPKAEAGADTVGSA), 1014-1087 (AVPK…ACRK), 1302-1430 (GSWA…ANSG), 1521-1715 (GSWG…RSED), 1911-1931 (SNTFRSKSGKDASFESGAGDN), and 1954-1973 (NENTSEDKSAPKAKAKKSSE). Residues 526 to 536 (GKARGKAKAKC) show a composition bias toward basic residues. Polar residues predominate over residues 1073-1087 (TSESEGGSGTQACRK). 2 stretches are compositionally biased toward gly residues: residues 1328–1341 (SWAGAGGQASGGSM) and 1403–1414 (AGAGGQAGGGSK). The segment covering 1419-1430 (DQSSGRSWANSG) has biased composition (polar residues). Over residues 1521–1535 (GSWGGASGQDVGGSR) the composition is skewed to gly residues. Residues 1537–1558 (GPTNQSSAGSWDSPGSQVSGSC) show a composition bias toward polar residues. Gly residues-rich tracts occupy residues 1581-1598 (IGGGFWPGAGDQTGGGSR) and 1609-1623 (GSWGVAGGQVLGGAR). Positions 1628 to 1645 (DQSSGGSWAGTGNQSSGR) are enriched in polar residues. Low complexity predominate over residues 1674–1687 (GAGSQASGESWAGS). ARM repeat units lie at residues 2031–2071 (RCKH…NSAD), 2073–2112 (SYSHEVVRNVGGISVIESLLNNPYPSVRQKALNALNNISV), 2153–2192 (ITSEYQHMVTNYISEFLRLLTVGSGETKDHVLGMLLNFSK), and 2194–2234 (PSMT…NINY).

Belongs to the eutherian X-chromosome-specific Armcx family.

Its subcellular location is the membrane. The chain is Armadillo repeat-containing X-linked protein 4 (ARMCX4) from Homo sapiens (Human).